We begin with the raw amino-acid sequence, 348 residues long: Nuclear receptor subfamily 1 group I member 3 (348 aa).

Residues 8–83 (PRSCMVCGDR…AGMKKEMILS (76 aa)) constitute a DNA-binding region (nuclear receptor). An NR C4-type zinc finger spans residues 11 to 31 (CMVCGDRATGYHFHALTCEGC). Threonine 38 carries the phosphothreonine; by PKC modification. Residues 47–71 (CPFAGSCKVNKAQRRHCPACRLQKC) form an NR C4-type zinc finger. Residues 109–348 (GQQELVQTLL…MMPLLQEICS (240 aa)) form the NR LBD domain.

Belongs to the nuclear hormone receptor family. NR1 subfamily. Heterodimer of NR1I3 and RXR. Interacts with PSMC4. Interacts with ECT2. Directly interacts with DNAJC7; this complex may also include HSP90. Interacts with CRY1. Interacts with CRY2 in a ligand-dependent manner. Post-translationally, phosphorylated at Thr-38 by PKC, dephosphorylation of Thr-38 is required for nuclear translocation and activation.

It is found in the nucleus. The protein localises to the cytoplasm. Its subcellular location is the cytoskeleton. In terms of biological role, binds and transactivates the retinoic acid response elements that control expression of the retinoic acid receptor beta 2 and alcohol dehydrogenase 3 genes. Transactivates both the phenobarbital responsive element module of the human CYP2B6 gene and the CYP3A4 xenobiotic response element. This is Nuclear receptor subfamily 1 group I member 3 (NR1I3) from Pusa sibirica (Baikal seal).